Reading from the N-terminus, the 117-residue chain is Large ribosomal subunit protein uL23 (117 aa).

This sequence belongs to the universal ribosomal protein uL23 family. In terms of assembly, part of the 50S ribosomal subunit. Contacts protein L29, and trigger factor when it is bound to the ribosome.

Its function is as follows. One of the early assembly proteins it binds 23S rRNA. One of the proteins that surrounds the polypeptide exit tunnel on the outside of the ribosome. Forms the main docking site for trigger factor binding to the ribosome. This chain is Large ribosomal subunit protein uL23, found in Acetivibrio thermocellus (strain ATCC 27405 / DSM 1237 / JCM 9322 / NBRC 103400 / NCIMB 10682 / NRRL B-4536 / VPI 7372) (Clostridium thermocellum).